A 234-amino-acid chain; its full sequence is UPF0441 protein plu3956 (234 aa).

Disordered regions lie at residues 105 to 129 and 149 to 234; these read QAGL…QQSG and SAPS…SVGG. The segment covering 110–127 has biased composition (low complexity); it reads TTTSSTSTNGEAQAQQQQ. Residues 150 to 175 are compositionally biased toward polar residues; sequence APSQPLFSSKSATSPANGQFVDSTGK. 2 stretches are compositionally biased toward low complexity: residues 188-205 and 216-234; these read TVPK…TTIT and QSTM…SVGG.

It belongs to the UPF0441 family.

The protein is UPF0441 protein plu3956 of Photorhabdus laumondii subsp. laumondii (strain DSM 15139 / CIP 105565 / TT01) (Photorhabdus luminescens subsp. laumondii).